The chain runs to 57 residues: Ribosome modulation factor 2 (57 aa).

The disordered stretch occupies residues 1-24; that stretch reads MKRQKRDKLGRAHSNGYQAGLGGK.

The protein belongs to the ribosome modulation factor family.

The protein resides in the cytoplasm. In terms of biological role, during stationary phase, converts 70S ribosomes to an inactive dimeric form (100S ribosomes). This Colwellia psychrerythraea (strain 34H / ATCC BAA-681) (Vibrio psychroerythus) protein is Ribosome modulation factor 2.